We begin with the raw amino-acid sequence, 199 residues long: Ribosome biogenesis protein RLP24 (199 aa).

The tract at residues 147 to 182 is disordered; that stretch reads KEQERAESVSEQEESEEEEEDMEIDSDEEEEEQLEK. A compositionally biased stretch (acidic residues) spans 156–179; it reads SEQEESEEEEEDMEIDSDEEEEEQ. Serine 172 carries the phosphoserine modification.

This sequence belongs to the eukaryotic ribosomal protein eL24 family. Associated with nucleolar and cytoplasmic pre-60S particles. At the end of biogenesis it dissociates from cytoplasmic pre-60S particles and is likely to be exchanged for its ribosomal homolog, RPL24. Interacts (via C-terminus) with AFG2 (hexameric form); the interaction is direct, recruits AFG2 to pre-60S ribosomal particles and promotes AFG2 ATPase activity and RLP24 release from pre-60S ribosomal particles. Interacts with NOG1; the interaction is direct.

The protein localises to the cytoplasm. The protein resides in the nucleus. In terms of biological role, involved in the biogenesis of the 60S ribosomal subunit. Ensures the docking of NOG1 to pre-60S ribosomal particles. Activates and recruits ATPase AFG2 to cytoplasmic pre-60S ribosomal particles. In Saccharomyces cerevisiae (strain ATCC 204508 / S288c) (Baker's yeast), this protein is Ribosome biogenesis protein RLP24 (RLP24).